We begin with the raw amino-acid sequence, 387 residues long: Phosphoglycerate kinase (387 aa).

Substrate contacts are provided by residues D21 to N23, R36, H59 to R62, R113, and R146. Residues K197, E314, and G340–T343 contribute to the ATP site.

This sequence belongs to the phosphoglycerate kinase family. As to quaternary structure, monomer.

It is found in the cytoplasm. It carries out the reaction (2R)-3-phosphoglycerate + ATP = (2R)-3-phospho-glyceroyl phosphate + ADP. The protein operates within carbohydrate degradation; glycolysis; pyruvate from D-glyceraldehyde 3-phosphate: step 2/5. This Photorhabdus laumondii subsp. laumondii (strain DSM 15139 / CIP 105565 / TT01) (Photorhabdus luminescens subsp. laumondii) protein is Phosphoglycerate kinase.